A 902-amino-acid chain; its full sequence is MMNRSEMQKLGFEHVRYYTESPYNRGESSANVATTSNYYGEDEPYVEITLDIHDDSVSVYGLKSPNHRGAGSNYEDQSLLRQGRSGRSNSVLKRLASSVSTGITRVASSVSSSSARKPPRPQLAKLRRSKSRAELALKGLKFITKTDGVTGWPEVEKRFYVMTMTTNGLLHRSRFGECIGMKSTEFALALFDALARRENVSGDSININELKEFWKQITDQDFDSRLRTFFAMVDKDSDGRLNEAEVREIITLSASANELDNIRRQADEYAALIMEELDPYHYGYIMIENLEILLLQAPMQDVRDGEGKKLSKMLSQNLMVPQSRNLGARFCRGMKYFLFDNWKRVWVMALWIGAMAGLFTWKFMEYRKRSAYEVMGVCVCIAKGAAETLKLNMAMILLPVCRNTITWLRTKTKLSAIVPFDDSLNFHKVIAIGISVGVGIHATSHLACDFPRLIAADEDQYEPMEKYFGPQTKRYLDFVQSVEGVTGIGMVVLMTIAFTLATTWFRRNKLNLPGPLKKITGFNAFWYSHHLFVIVYSLLVVHGFYVYLIIEPWYKKTTWMYLMVPVVLYLCERLIRAFRSSVEAVSVLKVAVLPGNVLSLHLSRPSNFRYKSGQYMYLNCSAVSTLEWHPFSITSAPGDDYLSVHIRVLGDWTKQLRSLFSEVCKPRPPDEHRLNRADSKHWDYIPDFPRILIDGPYGAPAQDYKKFEVVLLVGLGIGATPMISIVSDIINNLKGVEEGSNRRQSPIHNMVTPPVSPSRKSETFRTKRAYFYWVTREQGSFDWFKNVMDEVTETDRKNVIELHNYCTSVYEEGDARSALITMLQSLNHAKHGVDVVSGTRVMSHFARPNWRSVFKRIAVNHPKTRVGVFYCGAAGLVKELRHLSLDFSHKTSTKFIFHKENF.

Over 1 to 344 (MMNRSEMQKL…KYFLFDNWKR (344 aa)) the chain is Cytoplasmic. 2 disordered regions span residues 63-87 (KSPNHRGAGSNYEDQSLLRQGRSGR) and 107-130 (ASSVSSSSARKPPRPQLAKLRRSK). Over residues 74–87 (YEDQSLLRQGRSGR) the composition is skewed to polar residues. Residues 107-116 (ASSVSSSSAR) are compositionally biased toward low complexity. EF-hand-like stretches follow at residues 163–173 (TMTTNGLLHRS) and 198–209 (ENVSGDSININE). 2 consecutive EF-hand domains span residues 221–256 (DFDSRLRTFFAMVDKDSDGRLNEAEVREIITLSASA) and 265–300 (QADEYAALIMEELDPYHYGYIMIENLEILLLQAPMQ). Residues Asp-234, Asp-236, Asp-238, Arg-240, and Glu-245 each contribute to the Ca(2+) site. Residues Ser-311 and Ser-315 each carry the phosphoserine modification. A helical membrane pass occupies residues 345–365 (VWVMALWIGAMAGLFTWKFME). Residues 366–380 (YRKRSAYEVMGVCVC) are Extracellular-facing. The chain crosses the membrane as a helical span at residues 381–401 (IAKGAAETLKLNMAMILLPVC). One can recognise a Ferric oxidoreductase domain in the interval 383–540 (KGAAETLKLN…LFVIVYSLLV (158 aa)). The Cytoplasmic portion of the chain corresponds to 402–428 (RNTITWLRTKTKLSAIVPFDDSLNFHK). The chain crosses the membrane as a helical span at residues 429–449 (VIAIGISVGVGIHATSHLACD). At 450-484 (FPRLIAADEDQYEPMEKYFGPQTKRYLDFVQSVEG) the chain is on the extracellular side. Residues 485 to 505 (VTGIGMVVLMTIAFTLATTWF) form a helical membrane-spanning segment. The Cytoplasmic portion of the chain corresponds to 506-529 (RRNKLNLPGPLKKITGFNAFWYSH). The chain crosses the membrane as a helical span at residues 530–550 (HLFVIVYSLLVVHGFYVYLII). Topologically, residues 551-709 (EPWYKKTTWM…PAQDYKKFEV (159 aa)) are extracellular. Residues 575–703 (IRAFRSSVEA…DGPYGAPAQD (129 aa)) enclose the FAD-binding FR-type domain. The helical transmembrane segment at 710–730 (VLLVGLGIGATPMISIVSDII) threads the bilayer. The Cytoplasmic portion of the chain corresponds to 731–902 (NNLKGVEEGS…TKFIFHKENF (172 aa)). Positions 738–760 (EGSNRRQSPIHNMVTPPVSPSRK) are disordered.

It belongs to the RBOH (TC 5.B.1.3) family. As to quaternary structure, monomer and homodimer.

The protein localises to the membrane. Calcium-dependent NADPH oxidase that generates superoxide. The protein is Respiratory burst oxidase homolog protein A (RBOHA) of Arabidopsis thaliana (Mouse-ear cress).